The sequence spans 708 residues: RUN and FYVE domain-containing protein 1 (708 aa).

Residues 1–17 (MADREGGCAAGRGRELE) show a composition bias toward basic and acidic residues. The interval 1–57 (MADREGGCAAGRGRELEPELEPGPGPGSALEPGEEFEIVDRSQLPGPGDLRSATRPR) is disordered. Residues 139-271 (DADHAPLQQF…LDANLCLKGE (133 aa)) form the RUN domain. Positions 321-374 (TVGDLQTKIDGLEKTNSKLQEELSAATDRICSLQEEQQQLREQNELIRERSEKS) form a coiled coil. Phosphotyrosine is present on residues Tyr-389 and Tyr-400. Residues 405-617 (KQLKEEKKVR…QALQEMGLHL (213 aa)) are a coiled coil. The disordered stretch occupies residues 493–522 (QVMSSMKQMEERLQHSERARQGAEERSHKL). Residues 500–522 (QMEERLQHSERARQGAEERSHKL) show a composition bias toward basic and acidic residues. Positions 615 to 625 (LHLSQSKLKME) are interaction with RAB4. A Phosphoserine modification is found at Ser-620. The segment at 642 to 700 (DDEATHCRQCEKEFSISRRKHHCRNCGHIFCNTCSSNELALPSYPKPVRVCDSCHTLLL) adopts an FYVE-type zinc-finger fold. The Zn(2+) site is built by Cys-648, Cys-651, Cys-664, Cys-667, Cys-672, Cys-675, Cys-692, and Cys-695.

As to quaternary structure, self-assembles through coiled coil domains to drive ELVA (endo-lysosomal vesicular assembly) formation. Interacts with BMX. May interact with SSB. Interacts with RAB4 and RAB5 that have been activated by GTP-binding. Interacts WITH RAB14 and RAB4B (GTP-bound form); the interactions allow endosomal tethering and fusion. Interacts with ARL8B (GTP-bound form); the interaction is required for RUFY1 endosomal location and promotes interaction with RAB14. Phosphorylation on Tyr-389 and/or Tyr-400 is required for interaction with BMX and endosomal targeting. In terms of tissue distribution, broadly expressed, with highest levels in lung, testis, kidney and brain.

It is found in the early endosome membrane. Functionally, activating adapter involved in cargo sorting from early/recycling endosomes. Regulates retrieval of proteins from endosomes to the trans-Golgi network through interaction with the dynein-dynactin complex. Dual effector of RAB4B and RAB14, mediates a cooperative interaction allowing endosomal tethering and fusion. Binds phospholipid vesicles containing phosphatidylinositol 3-phosphate and participates in early endosomal trafficking. In oocytes, self-assembles to form a protein matrix which hold together endolysosomes, autophagosomes and proteasomes and generate non-membrane-bound compartments called endo-lysosomal vesicular assemblies (ELVAs). In immature oocytes, ELVAs sequester ubiquitinated protein aggregates and degrade them upon oocyte maturation. The sequence is that of RUN and FYVE domain-containing protein 1 from Homo sapiens (Human).